Consider the following 135-residue polypeptide: 30 kDa antigenic glycoprotein (135 aa).

Residues 1-5 form the signal peptide; sequence GNTYS. N-linked (GlcNAc...) asparagine glycans are attached at residues asparagine 22, asparagine 31, asparagine 57, and asparagine 73.

To H.contortus 15 kDa excretory/secretory protein.

It localises to the secreted. The sequence is that of 30 kDa antigenic glycoprotein from Trichostrongylus colubriformis (Black scour worm).